A 124-amino-acid polypeptide reads, in one-letter code: UPF0102 protein TM1040_0449 (124 aa).

Belongs to the UPF0102 family.

The protein is UPF0102 protein TM1040_0449 of Ruegeria sp. (strain TM1040) (Silicibacter sp.).